Consider the following 339-residue polypeptide: MVREEVAGSTQTLQWKCVESRVDSKRLYYGRFILSPLRKGQADTVGIALRRALLGEIEGTCITRAKFGSVPHEYSTIAGIEESVQEILLNLKEIVLRSNLYGVRDASICVKGPRYITAQDIILPPSVEIVDTAQPIANLTEPIDFCIELQIKRDRGYQTELRKNYQDGSYPIDAVSMPVRNVNYSIFSCGNGNEKHEILFLEIWTNGSLTPKEALYEASRNLIDLFLPFLHAEEEGTSFEENKNRFTPPLFTFQKRLTNLKKNKKGIPLNCIFIDQLELPSRTYNCLKRANIHTLLDLLSKTEEDLMRIESFRMEDRKQIWDTLEKYLPMDLLKNKLSF.

Residues 1 to 233 are alpha N-terminal domain (alpha-NTD); the sequence is MVREEVAGST…DLFLPFLHAE (233 aa). The interval 266-339 is alpha C-terminal domain (alpha-CTD); sequence GIPLNCIFID…MDLLKNKLSF (74 aa).

It belongs to the RNA polymerase alpha chain family. In plastids the minimal PEP RNA polymerase catalytic core is composed of four subunits: alpha, beta, beta', and beta''. When a (nuclear-encoded) sigma factor is associated with the core the holoenzyme is formed, which can initiate transcription.

It is found in the plastid. The protein localises to the chloroplast. It carries out the reaction RNA(n) + a ribonucleoside 5'-triphosphate = RNA(n+1) + diphosphate. Functionally, DNA-dependent RNA polymerase catalyzes the transcription of DNA into RNA using the four ribonucleoside triphosphates as substrates. The polypeptide is DNA-directed RNA polymerase subunit alpha (Agrostis stolonifera (Creeping bentgrass)).